Here is an 89-residue protein sequence, read N- to C-terminus: Small ribosomal subunit protein uS14A (89 aa).

It belongs to the universal ribosomal protein uS14 family. As to quaternary structure, part of the 30S ribosomal subunit. Contacts proteins S3 and S10.

In terms of biological role, binds 16S rRNA, required for the assembly of 30S particles and may also be responsible for determining the conformation of the 16S rRNA at the A site. The sequence is that of Small ribosomal subunit protein uS14A from Listeria welshimeri serovar 6b (strain ATCC 35897 / DSM 20650 / CCUG 15529 / CIP 8149 / NCTC 11857 / SLCC 5334 / V8).